The primary structure comprises 118 residues: MKVKNVKPYKRRSLELIEMAIDMTKNREYQLAREYTKLAITYSRKFRFKIPIEYKRSICRKCYVPLVIGLTERRRIKNKVVIRTCLLCGWVRRYELKRDSKEGKGIPPRHKNRQERTQ.

Residues C59, C62, C85, and C88 each contribute to the Zn(2+) site.

It belongs to the eukaryotic/archaeal RNase P protein component 4 family. In terms of assembly, consists of a catalytic RNA component and at least 4-5 protein subunits. Requires Zn(2+) as cofactor.

The protein localises to the cytoplasm. The enzyme catalyses Endonucleolytic cleavage of RNA, removing 5'-extranucleotides from tRNA precursor.. Part of ribonuclease P, a protein complex that generates mature tRNA molecules by cleaving their 5'-ends. The protein is Ribonuclease P protein component 4 of Sulfolobus acidocaldarius (strain ATCC 33909 / DSM 639 / JCM 8929 / NBRC 15157 / NCIMB 11770).